The chain runs to 167 residues: Ureidoglycolate lyase (167 aa).

The protein belongs to the ureidoglycolate lyase family. Homodimer. Ni(2+) is required as a cofactor.

It carries out the reaction (S)-ureidoglycolate = urea + glyoxylate. Its pathway is nitrogen metabolism; (S)-allantoin degradation. Catalyzes the catabolism of the allantoin degradation intermediate (S)-ureidoglycolate, generating urea and glyoxylate. Involved in the utilization of allantoin as nitrogen source. This chain is Ureidoglycolate lyase, found in Pseudomonas entomophila (strain L48).